A 1083-amino-acid chain; its full sequence is Solute carrier family 12 member 7 (1083 aa).

Positions M1–F52 are disordered. At M1–G119 the chain is on the cytoplasmic side. Residues A12–E26 show a composition bias toward basic and acidic residues. Residue T30 is modified to Phosphothreonine. Phosphoserine is present on residues S50 and S62. Residues T120–T142 form a discontinuously helical membrane-spanning segment. Positions 131 and 132 each coordinate K(+). V135 is a chloride binding site. At W143–G149 the chain is on the extracellular side. Residues V150 to S172 form a helical membrane-spanning segment. At A173 to E196 the chain is on the cytoplasmic side. Residues F197 to L225 traverse the membrane as a helical segment. Residues T226 to H249 are Extracellular-facing. Helical transmembrane passes span N250–V270 and Y272–F300. At D301–S419 the chain is on the extracellular side. Disulfide bonds link C308–C323 and C343–C352. N312 carries an N-linked (GlcNAc...) asparagine glycan. N-linked (GlcNAc...) asparagine glycosylation occurs at N360. Residues F420–R440 traverse the membrane as a helical segment. K(+) contacts are provided by P429 and T432. Residue P429 coordinates chloride. Residues G433 and I434 each coordinate chloride. At S441–S450 the chain is on the cytoplasmic side. The helical transmembrane segment at I451–F473 threads the bilayer. At G474–P504 the chain is on the extracellular side. A helical membrane pass occupies residues W505–Q531. Residues A532 to P554 are Cytoplasmic-facing. Helical transmembrane passes span T555–I571 and L574–V598. Residue Y589 coordinates chloride. The Cytoplasmic segment spans residues Q599–K612. 2 helical membrane passes run F613 to I632 and Y636 to Y651. Topologically, residues I652–S1083 are cytoplasmic. Positions G664 to V680 are scissor helix. Residues T973 and T980 each carry the phosphothreonine modification.

The protein belongs to the SLC12A transporter family. K/Cl co-transporter subfamily. In terms of assembly, homodimer; adopts a domain-swap conformation at the scissor helices connecting the transmembrane domain and C-terminal domain. Heterodimer with K-Cl cotransporter SLC12A5. In terms of tissue distribution, detected in muscle, brain, lung, heart and kidney.

The protein resides in the cell membrane. The catalysed reaction is K(+)(in) + chloride(in) = K(+)(out) + chloride(out). Its activity is regulated as follows. Activated by N-ethylmaleimide (NEM). Inhibited by furosemide, DIDS and bumetanide. The inhibition is much stronger in the presence of 50 mM K(+) in the uptake medium. Inhibited by DIOA. Inhibited by WNK3. In terms of biological role, mediates electroneutral potassium-chloride cotransport when activated by cell swelling. May mediate K(+) uptake into Deiters' cells in the cochlea and contribute to K(+) recycling in the inner ear. Important for the survival of cochlear outer and inner hair cells and the maintenance of the organ of Corti. May be required for basolateral Cl(-) extrusion in the kidney and contribute to renal acidification. This is Solute carrier family 12 member 7 from Homo sapiens (Human).